A 165-amino-acid polypeptide reads, in one-letter code: RxLR effector protein CRE12 (165 aa).

The first 23 residues, 1–23 (MRLAAFVLVAVAFAIIPDGRVSA), serve as a signal peptide directing secretion. A RxLR-dEER motif is present at residues 40–59 (RLLRLNAVPQPVETGNQEER).

The protein belongs to the RxLR effector family.

It is found in the secreted. The protein resides in the host cell. In terms of biological role, effector that is involved in host plant infection. Contributes to virulence during the early infection stage, by inhibiting plant defense responses induced by both PAMP-triggered immunity (PTI) and effector-triggered immunity (ETI). The sequence is that of RxLR effector protein CRE12 from Phytophthora infestans (strain T30-4) (Potato late blight agent).